Reading from the N-terminus, the 265-residue chain is RING finger protein 208 (265 aa).

The disordered stretch occupies residues 83 to 106 (MPTLEGASHTPPLPRRPRKGSSEL). Ser-103 bears the Phosphoserine mark. Residues 147–194 (CPTCGHTYNVTQRRPRVLSCLHSVCEQCLQILYESCPKYKFISCPTCH) form an RING-type zinc finger.

This is RING finger protein 208 (Rnf208) from Mus musculus (Mouse).